The following is a 522-amino-acid chain: Glucose-6-phosphate 1-dehydrogenase (522 aa).

NADP(+)-binding positions include 40-47 (GASGDLAK), Arg74, and Lys177. D-glucose 6-phosphate-binding positions include Lys177, 207-211 (HYLGK), Glu245, and Asp264. His269 (proton acceptor) is an active-site residue. Arg364 contributes to the NADP(+) binding site. D-glucose 6-phosphate contacts are provided by Lys367 and Lys372. Lys373, Arg377, and Arg401 together coordinate NADP(+). Residue Gln403 coordinates D-glucose 6-phosphate. NADP(+) is bound by residues 409-411 (YMK), 429-431 (DLT), Arg495, and Trp517.

This sequence belongs to the glucose-6-phosphate dehydrogenase family.

The protein resides in the cytoplasm. Its subcellular location is the cytosol. The enzyme catalyses D-glucose 6-phosphate + NADP(+) = 6-phospho-D-glucono-1,5-lactone + NADPH + H(+). It participates in carbohydrate degradation; pentose phosphate pathway; D-ribulose 5-phosphate from D-glucose 6-phosphate (oxidative stage): step 1/3. Its function is as follows. Cytosolic glucose-6-phosphate dehydrogenase that catalyzes the first and rate-limiting step of the oxidative branch within the pentose phosphate pathway/shunt, an alternative route to glycolysis for the dissimilation of carbohydrates and a major source of reducing power and metabolic intermediates for fatty acid and nucleic acid biosynthetic processes. This chain is Glucose-6-phosphate 1-dehydrogenase (gspd-1), found in Caenorhabditis elegans.